The sequence spans 541 residues: Glucose-6-phosphate isomerase (541 aa).

Glutamate 346 acts as the Proton donor in catalysis. Residues histidine 377 and lysine 506 contribute to the active site.

It belongs to the GPI family.

The protein resides in the cytoplasm. It catalyses the reaction alpha-D-glucose 6-phosphate = beta-D-fructose 6-phosphate. The protein operates within carbohydrate biosynthesis; gluconeogenesis. It functions in the pathway carbohydrate degradation; glycolysis; D-glyceraldehyde 3-phosphate and glycerone phosphate from D-glucose: step 2/4. Its function is as follows. Catalyzes the reversible isomerization of glucose-6-phosphate to fructose-6-phosphate. This Rhizobium leguminosarum bv. trifolii (strain WSM2304) protein is Glucose-6-phosphate isomerase.